The primary structure comprises 603 residues: Alpha-1,2-mannosyltransferase algn-9 (603 aa).

Residues 1–25 are disordered; sequence MVTHRRKGGSGPPQKPPPRIVDRSS. Residues 1 to 108 lie on the Lumenal side of the membrane; sequence MVTHRRKGGS…EYSPVYAIRS (108 aa). A helical membrane pass occupies residues 109–129; the sequence is YFYIYLHYIPASLFANLFGDT. Residue Lys130 is a topological domain, cytoplasmic. Residues 131-151 traverse the membrane as a helical segment; the sequence is IVVFTLIRLTIGLFCLLGEYY. Residues 152–166 are Lumenal-facing; sequence AFDAICKKINIATGR. The chain crosses the membrane as a helical span at residues 167–187; that stretch reads FFILFSIFSSGMFLASTAFVP. At 188–195 the chain is on the cytoplasmic side; that stretch reads SSFCMAIT. Residues 196-216 traverse the membrane as a helical segment; it reads FYILGAYLNENWTAGIFCVAF. At 217–218 the chain is on the lumenal side; sequence ST. The chain crosses the membrane as a helical span at residues 219 to 239; that stretch reads MVGWPFSAVLGLPIVADMLLL. Over 240 to 245 the chain is Cytoplasmic; it reads KGLRIR. A helical membrane pass occupies residues 246–266; the sequence is FILTSLVIGLCIGGVQVITDS. Topologically, residues 267 to 310 are lumenal; it reads HYFGKTVLAPLNIFLYNVVSGPGPSLYGEEPLSFYIKNLFNNWN. The helical transmembrane segment at 311-331 threads the bilayer; sequence IVIFAAPFGFPLSLAYFTKVW. At 332-343 the chain is on the cytoplasmic side; sequence MSQDRNVALYQR. The helical transmembrane segment at 344–364 threads the bilayer; the sequence is FAPIILLAVTTAAWLLIFGSQ. The Lumenal portion of the chain corresponds to 365-370; sequence AHKEER. Residues 371–391 form a helical membrane-spanning segment; that stretch reads FLFPIYPFIAFFAALALDATN. Topologically, residues 392–397 are cytoplasmic; that stretch reads RLCLKK. A helical membrane pass occupies residues 398-418; it reads LGMDNILSILFILCFAILSAS. The Lumenal segment spans residues 419 to 603; it reads RTYSIHNNYG…TCTLYRKSNL (185 aa). An N-linked (GlcNAc...) asparagine glycan is attached at Asn443.

It belongs to the glycosyltransferase 22 family.

It localises to the endoplasmic reticulum membrane. The enzyme catalyses an alpha-D-Man-(1-&gt;2)-alpha-D-Man-(1-&gt;2)-alpha-D-Man-(1-&gt;3)-[alpha-D-Man-(1-&gt;3)-alpha-D-Man-(1-&gt;6)]-beta-D-Man-(1-&gt;4)-beta-D-GlcNAc-(1-&gt;4)-alpha-D-GlcNAc-diphospho-di-trans,poly-cis-dolichol + a di-trans,poly-cis-dolichyl beta-D-mannosyl phosphate = an alpha-D-Man-(1-&gt;2)-alpha-D-Man-(1-&gt;2)-alpha-D-Man-(1-&gt;3)-[alpha-D-Man-(1-&gt;2)-alpha-D-Man-(1-&gt;3)-alpha-D-Man-(1-&gt;6)]-beta-D-Man-(1-&gt;4)-beta-D-GlcNAc-(1-&gt;4)-alpha-D-GlcNAc-diphospho-di-trans,poly-cis-dolichol + a di-trans,poly-cis-dolichyl phosphate + H(+). It carries out the reaction an alpha-D-Man-(1-&gt;2)-alpha-D-Man-(1-&gt;2)-alpha-D-Man-(1-&gt;3)-[alpha-D-Man-(1-&gt;2)-alpha-D-Man-(1-&gt;3)-[alpha-D-Man-(1-&gt;6)]-alpha-D-Man-(1-&gt;6)]-beta-D-Man-(1-&gt;4)-beta-D-GlcNAc-(1-&gt;4)-alpha-D-GlcNAc-diphospho-di-trans,poly-cis-dolichol + a di-trans,poly-cis-dolichyl beta-D-mannosyl phosphate = an alpha-D-Man-(1-&gt;2)-alpha-D-Man-(1-&gt;2)-alpha-D-Man-(1-&gt;3)-[alpha-D-Man-(1-&gt;2)-alpha-D-Man-(1-&gt;3)-[alpha-D-Man-(1-&gt;2)-alpha-D-Man-(1-&gt;6)]-alpha-D-Man-(1-&gt;6)]-beta-D-Man-(1-&gt;4)-beta-D-GlcNAc-(1-&gt;4)-alpha-D-GlcNAc-diphospho-di-trans,poly-cis-dolichol + a di-trans,poly-cis-dolichyl phosphate + H(+). Its pathway is protein modification; protein glycosylation. Functionally, catalyzes the transfer of mannose from Dol-P-Man to lipid-linked oligosaccharides. This Caenorhabditis elegans protein is Alpha-1,2-mannosyltransferase algn-9.